Reading from the N-terminus, the 313-residue chain is Ribose-phosphate pyrophosphokinase (313 aa).

ATP contacts are provided by residues 37-39 (DGE) and 96-97 (RQ). Residues H131 and D170 each contribute to the Mg(2+) site. K193 is a catalytic residue. Residues R195, D219, and 223–227 (DTAGT) each bind D-ribose 5-phosphate.

Belongs to the ribose-phosphate pyrophosphokinase family. Class I subfamily. In terms of assembly, homohexamer. Requires Mg(2+) as cofactor.

It localises to the cytoplasm. The enzyme catalyses D-ribose 5-phosphate + ATP = 5-phospho-alpha-D-ribose 1-diphosphate + AMP + H(+). Its pathway is metabolic intermediate biosynthesis; 5-phospho-alpha-D-ribose 1-diphosphate biosynthesis; 5-phospho-alpha-D-ribose 1-diphosphate from D-ribose 5-phosphate (route I): step 1/1. Functionally, involved in the biosynthesis of the central metabolite phospho-alpha-D-ribosyl-1-pyrophosphate (PRPP) via the transfer of pyrophosphoryl group from ATP to 1-hydroxyl of ribose-5-phosphate (Rib-5-P). The sequence is that of Ribose-phosphate pyrophosphokinase from Pseudomonas syringae pv. tomato (strain ATCC BAA-871 / DC3000).